A 531-amino-acid chain; its full sequence is Splicing factor ESS-2 (531 aa).

2 disordered regions span residues 104 to 163 (RTPI…RKKK) and 453 to 531 (PFAS…GDFF). Positions 105–114 (TPITTRSTTE) are enriched in polar residues. Low complexity-rich tracts occupy residues 125 to 136 (TPGPSSASTSSA) and 464 to 477 (SRPS…TPGS). The span at 480–498 (SRGSTTPGSSWSQGAQTPG) shows a compositional bias: polar residues.

It belongs to the ESS2 family.

It localises to the nucleus. Functionally, regulates pre-mRNA splicing. The protein is Splicing factor ESS-2 (ess-2) of Caenorhabditis elegans.